The following is a 473-amino-acid chain: Photosystem II CP43 reaction center protein (473 aa).

Positions 1–14 are excised as a propeptide; it reads MKTLYSLRRFYPVE. N-acetylthreonine is present on Thr-15. Thr-15 carries the phosphothreonine modification. The next 5 membrane-spanning stretches (helical) occupy residues 69–93, 134–155, 178–200, 255–275, and 291–312; these read LFEVAHFVPEKPMYEQGLILLPHLA, LLGPETLEESFPFFGYVWKDRN, KALYFGGVYDTWAPGGGDVRKIT, KPFAWARRAFVWSGEAYLSYS, and WFNNTAYPSEFYGPTGPEASQA. Glu-367 serves as a coordination point for [CaMn4O5] cluster. The chain crosses the membrane as a helical span at residues 447–471; the sequence is RARAAAAGFEKGIDRDLEPVLSMTP.

This sequence belongs to the PsbB/PsbC family. PsbC subfamily. As to quaternary structure, PSII is composed of 1 copy each of membrane proteins PsbA, PsbB, PsbC, PsbD, PsbE, PsbF, PsbH, PsbI, PsbJ, PsbK, PsbL, PsbM, PsbT, PsbX, PsbY, PsbZ, Psb30/Ycf12, at least 3 peripheral proteins of the oxygen-evolving complex and a large number of cofactors. It forms dimeric complexes. It depends on Binds multiple chlorophylls and provides some of the ligands for the Ca-4Mn-5O cluster of the oxygen-evolving complex. It may also provide a ligand for a Cl- that is required for oxygen evolution. PSII binds additional chlorophylls, carotenoids and specific lipids. as a cofactor.

The protein resides in the plastid. Its subcellular location is the chloroplast thylakoid membrane. Its function is as follows. One of the components of the core complex of photosystem II (PSII). It binds chlorophyll and helps catalyze the primary light-induced photochemical processes of PSII. PSII is a light-driven water:plastoquinone oxidoreductase, using light energy to abstract electrons from H(2)O, generating O(2) and a proton gradient subsequently used for ATP formation. This Acorus calamus var. americanus (American sweet flag) protein is Photosystem II CP43 reaction center protein.